The following is a 291-amino-acid chain: Probable alpha-L-glutamate ligase (291 aa).

The ATP-grasp domain occupies 104 to 287 (HQLLASQGID…VAGTIIQHLE (184 aa)). ATP contacts are provided by residues lysine 141, 178 to 179 (EF), aspartate 187, and 211 to 213 (RSN). Mg(2+) contacts are provided by aspartate 248, glutamate 260, and asparagine 262. Aspartate 248, glutamate 260, and asparagine 262 together coordinate Mn(2+).

It belongs to the RimK family. Mg(2+) is required as a cofactor. Requires Mn(2+) as cofactor.

In Xanthomonas campestris pv. campestris (strain 8004), this protein is Probable alpha-L-glutamate ligase.